A 209-amino-acid polypeptide reads, in one-letter code: MSRVYVFDHPLIQHKVTYIRDKNTGTKEFRELVDEVTTLMGYEITRDMPLEEITIETPVATCQSNVIAGKKVGLVPILRAGLGMVDGLMRLIPAAKVGHVGLYRDPETLQPIEYYVKLPSDVAERELIVTDPMLATGGSAVAALTALKKRGAKNLKLMCLIAAPEGIKLVQDEHPDVDIYVAAVDEYLNDHGYIVPGLGDAGDRLYGTK.

5-phospho-alpha-D-ribose 1-diphosphate contacts are provided by residues arginine 79, arginine 104, and 131–139 (DPMLATGGS). Uracil is bound by residues isoleucine 194 and 199–201 (GDA). Aspartate 200 lines the 5-phospho-alpha-D-ribose 1-diphosphate pocket.

Belongs to the UPRTase family. The cofactor is Mg(2+).

It catalyses the reaction UMP + diphosphate = 5-phospho-alpha-D-ribose 1-diphosphate + uracil. The protein operates within pyrimidine metabolism; UMP biosynthesis via salvage pathway; UMP from uracil: step 1/1. Its activity is regulated as follows. Allosterically activated by GTP. Its function is as follows. Catalyzes the conversion of uracil and 5-phospho-alpha-D-ribose 1-diphosphate (PRPP) to UMP and diphosphate. This Brevibacillus brevis (strain 47 / JCM 6285 / NBRC 100599) protein is Uracil phosphoribosyltransferase.